We begin with the raw amino-acid sequence, 388 residues long: Na(+)/H(+) antiporter NhaA (388 aa).

12 consecutive transmembrane segments (helical) span residues 14 to 34 (TIGILLIIATLLALFLENSPL), 59 to 79 (LLLWVNDGLMAVFFFYVGLEI), 95 to 115 (TFPAIAALGGMVVPALLFASL), 125 to 145 (GWAIPTATDIAFALGVLSLLG), 154 to 174 (VFLMTLAIVDDLGAIIVIALF), 177 to 197 (TKLSLTSLVVASIALTILFIM), 200 to 220 (MCVISKGAYILVGVALWVSVL), 222 to 242 (SGVHATLAGVALALLIPYRIN), 257 to 277 (GLHLWVNFFILPLFAFANAGV), 295 to 315 (IMLGLFIGKQLGVFGFGYLAV), 328 to 348 (LIQFYGVAVLAGIGFTMSLFI), and 362 to 382 (ADKLAVLIGSLLSGIWGYIVL).

This sequence belongs to the NhaA Na(+)/H(+) (TC 2.A.33) antiporter family.

It is found in the cell inner membrane. The catalysed reaction is Na(+)(in) + 2 H(+)(out) = Na(+)(out) + 2 H(+)(in). Functionally, na(+)/H(+) antiporter that extrudes sodium in exchange for external protons. The chain is Na(+)/H(+) antiporter NhaA from Nitratiruptor sp. (strain SB155-2).